The chain runs to 251 residues: Hydroxypyruvate/pyruvate aldolase (251 aa).

Residue His-44 is the Proton acceptor of the active site. Arg-69 is a 3-hydroxypyruvate binding site. Position 145 (Glu-145) interacts with Mg(2+). 2 residues coordinate 3-hydroxypyruvate: Thr-170 and Asp-171. Asp-171 lines the Mg(2+) pocket.

It belongs to the HpcH/HpaI aldolase family. As to quaternary structure, homohexamer. Trimer of homodimers. Mn(2+) is required as a cofactor. Requires Mg(2+) as cofactor. It depends on Co(2+) as a cofactor. Zn(2+) serves as cofactor.

The catalysed reaction is D-glyceraldehyde + 3-hydroxypyruvate = 2-dehydro-D-galactonate. It catalyses the reaction D-glyceraldehyde + pyruvate = 2-dehydro-3-deoxy-L-galactonate. It carries out the reaction L-glyceraldehyde + 3-hydroxypyruvate = (3S,4S,5S)-3,4,5,6-tetrahydroxy-2-oxohexanoate. The enzyme catalyses (R)-lactaldehyde + 3-hydroxypyruvate = (3S,4S,5R)-3,4,5-trihydroxy-2-oxohexanoate. The catalysed reaction is (R)-lactaldehyde + 3-hydroxypyruvate = (3S,4R,5R)-3,4,5-trihydroxy-2-oxohexanoate. It catalyses the reaction (S)-lactaldehyde + 3-hydroxypyruvate = (3S,4S,5S)-3,4,5-trihydroxy-2-oxohexanoate. It carries out the reaction D-erythrose + 3-hydroxypyruvate = (3S,4S,5R,6R)-3,4,5,6,7-pentahydroxy-2-oxoheptanoate. Its activity is regulated as follows. Binding of substrate induces a dynamic movement of the metal cofactor between an inactive coordination sphere to a catalytically active one. When oxaloacetate is used as substrate, activity is increased in the presence of micromolar concentrations of inorganic phosphate. The phosphate does not improve the binding of the substrate, but exclusively increases its rate of decarboxylation. Excessive phosphate concentrations negatively affect the reaction rate by removing the metal cofactor. Functionally, aldolase which can catalyze in vitro the aldolisation reaction between hydroxypyruvate (HPA) or pyruvate (PA) and D-glyceraldehyde (D-GA). The condensation of hydroxypyruvate and D-glyceraldehyde produces 2-dehydro-D-galactonate as the major product. The condensation of pyruvate and D-glyceraldehyde produces 2-dehydro-3-deoxy-L-galactonate. Can use other electrophilic substrates such as L-glyceraldehyde, D- and L-lactaldehyde and D-erythrose. Also catalyzes the retro-aldol type decarboxylation of oxaloacetate, a general property of known pyruvate aldolases. This Rhizorhabdus wittichii (strain DSM 6014 / CCUG 31198 / JCM 15750 / NBRC 105917 / EY 4224 / RW1) (Sphingomonas wittichii) protein is Hydroxypyruvate/pyruvate aldolase.